The sequence spans 817 residues: Myosin-A (817 aa).

Ser-19 is modified (phosphoserine). In terms of domain architecture, Myosin motor spans 97 to 771 (MSFGDIGLLN…GAKMLSKIQR (675 aa)). Residue 191 to 198 (GESGAGKT) participates in ATP binding. The segment at 661–671 (PHFIRCIKPNE) is actin-binding. Residues 773 to 817 (KLVEWENCVSVIEAAIMKYKHKQNVENNVSSLMRVQAHIRKRMVA) form a tail region.

The protein belongs to the TRAFAC class myosin-kinesin ATPase superfamily. Myosin family. In terms of assembly, interacts with ACT1.

It localises to the cell membrane. Functionally, myosins are actin-based motor molecules with ATPase activity. Unconventional myosins serve in intracellular movements. Their highly divergent tails are presumed to bind to membranous compartments, which would be moved relative to actin filaments. The polypeptide is Myosin-A (Plasmodium yoelii yoelii).